The sequence spans 312 residues: tRNA pseudouridine synthase B (312 aa).

D48 acts as the Nucleophile in catalysis.

Belongs to the pseudouridine synthase TruB family. Type 1 subfamily.

The catalysed reaction is uridine(55) in tRNA = pseudouridine(55) in tRNA. Its function is as follows. Responsible for synthesis of pseudouridine from uracil-55 in the psi GC loop of transfer RNAs. This Haemophilus influenzae (strain ATCC 51907 / DSM 11121 / KW20 / Rd) protein is tRNA pseudouridine synthase B.